Consider the following 188-residue polypeptide: Peptidyl-tRNA hydrolase (188 aa).

A tRNA-binding site is contributed by Tyr-15. The active-site Proton acceptor is His-20. Positions 66, 68, and 114 each coordinate tRNA.

The protein belongs to the PTH family. Monomer.

The protein resides in the cytoplasm. The enzyme catalyses an N-acyl-L-alpha-aminoacyl-tRNA + H2O = an N-acyl-L-amino acid + a tRNA + H(+). Hydrolyzes ribosome-free peptidyl-tRNAs (with 1 or more amino acids incorporated), which drop off the ribosome during protein synthesis, or as a result of ribosome stalling. Its function is as follows. Catalyzes the release of premature peptidyl moieties from peptidyl-tRNA molecules trapped in stalled 50S ribosomal subunits, and thus maintains levels of free tRNAs and 50S ribosomes. The sequence is that of Peptidyl-tRNA hydrolase from Lactococcus lactis subsp. lactis (strain IL1403) (Streptococcus lactis).